The primary structure comprises 486 residues: Pup--protein ligase (486 aa).

E33 is a Mg(2+) binding site. R76 provides a ligand contact to ATP. Y78 serves as a coordination point for Mg(2+). D80 functions as the Proton acceptor in the catalytic mechanism. Mg(2+) is bound at residue E86. ATP-binding residues include T89 and W451.

It belongs to the Pup ligase/Pup deamidase family. Pup-conjugating enzyme subfamily.

The enzyme catalyses ATP + [prokaryotic ubiquitin-like protein]-L-glutamate + [protein]-L-lysine = ADP + phosphate + N(6)-([prokaryotic ubiquitin-like protein]-gamma-L-glutamyl)-[protein]-L-lysine.. It participates in protein degradation; proteasomal Pup-dependent pathway. The protein operates within protein modification; protein pupylation. Functionally, catalyzes the covalent attachment of the prokaryotic ubiquitin-like protein modifier Pup to the proteasomal substrate proteins, thereby targeting them for proteasomal degradation. This tagging system is termed pupylation. The ligation reaction involves the side-chain carboxylate of the C-terminal glutamate of Pup and the side-chain amino group of a substrate lysine. This chain is Pup--protein ligase, found in Bifidobacterium longum (strain NCC 2705).